A 571-amino-acid chain; its full sequence is Putative phospholipase B-like 1 (571 aa).

An N-terminal signal peptide occupies residues 1-18 (MNWIFIFLAAAVAIGCEA). N-linked (GlcNAc...) asparagine glycans are attached at residues Asn-62, Asn-149, Asn-442, and Asn-473.

This sequence belongs to the phospholipase B-like family.

Its subcellular location is the lysosome. Its function is as follows. Putative phospholipase. The protein is Putative phospholipase B-like 1 of Caenorhabditis elegans.